The sequence spans 117 residues: Regulator of ribonuclease activity B (117 aa).

It belongs to the RraB family. In terms of assembly, interacts with the C-terminal region of Rne.

Its subcellular location is the cytoplasm. Functionally, globally modulates RNA abundance by binding to RNase E (Rne) and regulating its endonucleolytic activity. Can modulate Rne action in a substrate-dependent manner by altering the composition of the degradosome. The protein is Regulator of ribonuclease activity B of Pseudoalteromonas atlantica (strain T6c / ATCC BAA-1087).